The following is a 263-amino-acid chain: Thymidylate synthase (263 aa).

Residues arginine 25 and 123–124 each bind dUMP; that span reads RR. Cysteine 143 serves as the catalytic Nucleophile. DUMP is bound by residues 163–166, asparagine 174, and 204–206; these read RSGD and HIY. Residue aspartate 166 participates in (6R)-5,10-methylene-5,6,7,8-tetrahydrofolate binding. Serine 262 is a binding site for (6R)-5,10-methylene-5,6,7,8-tetrahydrofolate.

This sequence belongs to the thymidylate synthase family. Bacterial-type ThyA subfamily. As to quaternary structure, homodimer.

The protein resides in the cytoplasm. The enzyme catalyses dUMP + (6R)-5,10-methylene-5,6,7,8-tetrahydrofolate = 7,8-dihydrofolate + dTMP. It functions in the pathway pyrimidine metabolism; dTTP biosynthesis. In terms of biological role, catalyzes the reductive methylation of 2'-deoxyuridine-5'-monophosphate (dUMP) to 2'-deoxythymidine-5'-monophosphate (dTMP) while utilizing 5,10-methylenetetrahydrofolate (mTHF) as the methyl donor and reductant in the reaction, yielding dihydrofolate (DHF) as a by-product. This enzymatic reaction provides an intracellular de novo source of dTMP, an essential precursor for DNA biosynthesis. The sequence is that of Thymidylate synthase from Clostridium beijerinckii (strain ATCC 51743 / NCIMB 8052) (Clostridium acetobutylicum).